The chain runs to 374 residues: Chaperone protein DnaJ (374 aa).

The J domain maps to 5–70 (DYYEVLGVER…SKRAAYDQYG (66 aa)). The segment at 133–211 (GTTVNIRVPT…CHGEGRVEEY (79 aa)) adopts a CR-type zinc-finger fold. Residues Cys146, Cys149, Cys163, Cys166, Cys185, Cys188, Cys199, and Cys202 each coordinate Zn(2+). CXXCXGXG motif repeat units lie at residues 146–153 (CKPCDGSG), 163–170 (CPTCGGIG), 185–192 (CPRCHGQG), and 199–206 (CDSCHGEG).

This sequence belongs to the DnaJ family. Homodimer. Zn(2+) is required as a cofactor.

Its subcellular location is the cytoplasm. Its function is as follows. Participates actively in the response to hyperosmotic and heat shock by preventing the aggregation of stress-denatured proteins and by disaggregating proteins, also in an autonomous, DnaK-independent fashion. Unfolded proteins bind initially to DnaJ; upon interaction with the DnaJ-bound protein, DnaK hydrolyzes its bound ATP, resulting in the formation of a stable complex. GrpE releases ADP from DnaK; ATP binding to DnaK triggers the release of the substrate protein, thus completing the reaction cycle. Several rounds of ATP-dependent interactions between DnaJ, DnaK and GrpE are required for fully efficient folding. Also involved, together with DnaK and GrpE, in the DNA replication of plasmids through activation of initiation proteins. The chain is Chaperone protein DnaJ from Pseudomonas fluorescens (strain ATCC BAA-477 / NRRL B-23932 / Pf-5).